The primary structure comprises 527 residues: Amine oxidase [flavin-containing] A (527 aa).

Residue Met1 is modified to N-acetylmethionine. The Cytoplasmic segment spans residues 1–497 (MASQEKASMA…HSFWERNLPS (497 aa)). Phosphoserine is present on Ser383. An S-8alpha-FAD cysteine modification is found at Cys406. The chain crosses the membrane as a helical; Anchor for type IV membrane protein span at residues 498-518 (VGGLLKIIGFSTSITALWIVV). At 519-527 (YKFKLLTRS) the chain is on the mitochondrial intermembrane side. Residues 520-522 (KFK) form an interaction with membrane phospholipid headgroups region.

The protein belongs to the flavin monoamine oxidase family. As to quaternary structure, monomer, homo- or heterodimer (containing two subunits of similar size). Each subunit contains a covalently bound flavin. Enzymatically active as monomer. FAD serves as cofactor.

The protein resides in the mitochondrion outer membrane. The enzyme catalyses a secondary aliphatic amine + O2 + H2O = a primary amine + an aldehyde + H2O2. It catalyses the reaction a primary methyl amine + O2 + H2O = an aldehyde + H2O2 + NH4(+). The catalysed reaction is (R)-adrenaline + O2 + H2O = (R)-3,4-dihydroxymandelaldehyde + methylamine + H2O2. It carries out the reaction dopamine + O2 + H2O = 3,4-dihydroxyphenylacetaldehyde + H2O2 + NH4(+). The enzyme catalyses tyramine + O2 + H2O = (4-hydroxyphenyl)acetaldehyde + H2O2 + NH4(+). It catalyses the reaction (R)-noradrenaline + O2 + H2O = (R)-3,4-dihydroxymandelaldehyde + H2O2 + NH4(+). The catalysed reaction is serotonin + O2 + H2O = (5-hydroxyindol-3-yl)acetaldehyde + H2O2 + NH4(+). It carries out the reaction kynuramine + O2 + H2O = 3-(2-aminophenyl)-3-oxopropanal + H2O2 + NH4(+). The enzyme catalyses tryptamine + O2 + H2O = indole-3-acetaldehyde + H2O2 + NH4(+). It catalyses the reaction 2-phenylethylamine + O2 + H2O = 2-phenylacetaldehyde + H2O2 + NH4(+). Catalyzes the oxidative deamination of primary and some secondary amine such as neurotransmitters, with concomitant reduction of oxygen to hydrogen peroxide and has important functions in the metabolism of neuroactive and vasoactive amines in the central nervous system and peripheral tissues. Preferentially oxidizes serotonin. Also catalyzes the oxidative deamination of kynuramine to 3-(2-aminophenyl)-3-oxopropanal that can spontaneously condense to 4-hydroxyquinoline. In Equus caballus (Horse), this protein is Amine oxidase [flavin-containing] A.